Here is a 224-residue protein sequence, read N- to C-terminus: Deoxyribose-phosphate aldolase (224 aa).

Catalysis depends on Asp-92, which acts as the Proton donor/acceptor. Residue Lys-155 is the Schiff-base intermediate with acetaldehyde of the active site. Lys-184 acts as the Proton donor/acceptor in catalysis.

Belongs to the DeoC/FbaB aldolase family. DeoC type 1 subfamily.

Its subcellular location is the cytoplasm. It carries out the reaction 2-deoxy-D-ribose 5-phosphate = D-glyceraldehyde 3-phosphate + acetaldehyde. The protein operates within carbohydrate degradation; 2-deoxy-D-ribose 1-phosphate degradation; D-glyceraldehyde 3-phosphate and acetaldehyde from 2-deoxy-alpha-D-ribose 1-phosphate: step 2/2. In terms of biological role, catalyzes a reversible aldol reaction between acetaldehyde and D-glyceraldehyde 3-phosphate to generate 2-deoxy-D-ribose 5-phosphate. The protein is Deoxyribose-phosphate aldolase of Shouchella clausii (strain KSM-K16) (Alkalihalobacillus clausii).